Here is a 2024-residue protein sequence, read N- to C-terminus: MATGGGPFEDGMNDQDLPNWSNENVDDRLNNMDWGAQQKKANRSSEKNKKKFGVESDKRVTNDISPESSPGVGRRRTKTPHTFPHSRYMSQMSVPEQAELEKLKQRINFSDLDQRSIGSDSQGRATAANNKRQLSENRKPFNFLPMQINTNKSKDASTNPPNRETIGSAQCKELFASALSNDLLQNCQVSEEDGRGEPAMESSQIVSRLVQIRDYITKASSMREDLVEKNERSANVERLTHLIDHLKEQEKSYMKFLKKILARDPQQEPMEEIENLKKQHDLLKRMLQQQEQLRALQGRQAALLALQHKAEQAIAVMDDSVVAETAGSLSGVSITSELNEELNDLIQRFHNQLRDSQPPAVPDNRRQAESLSLTREVSQSRKPSASERLPDEKVELFSKMRVLQEKKQKMDKLLGELHTLRDQHLNNSSSSPQRSVDQRSTSAPSASVGLAPVVNGESNSLTSSVPYPTASLVSQNESENEGHLNPSEKLQKLNEVRKRLNELRELVHYYEQTSDMMTDAVNENRKDEETEESEYDSEHENSEPVTNIRNPQVASTWNEVNSHSNAQCVSNNRDGRTVNSNCEINNRSAANIRALNMPPSLDCRYNREGEQEIHVAQGEDDEEEEEEAEEEGVSGASLSSHRSSLVDEHPEDAEFEQKINRLMAAKQKLRQLQDLVAMVQDDDAAQGVISASASNLDDFYPAEEDTKQNSNNTRGNANKTQKDTGVNEKAREKFYEAKLQQQQRELKQLQEERKKLIDIQEKIQALQTACPDLQLSAASVGNCPTKKYMPAVTSTPTVNQHETSTSKSVFEPEDSSIVDNELWSEMRRHEMLREELRQRRKQLEALMAEHQRRQGLAETASPVAVSLRSDGSENLCTPQQSRTEKTMATWGGSTQCALDEEGDEDGYLSEGIVRTDEEEEEEQDASSNDNFSVCPSNSVNHNSYNGKETKNRWKNNCPFSADENYRPLAKTRQQNISMQRQENLRWVSELSYVEEKEQWQEQINQLKKQLDFSVSICQTLMQDQQTLSCLLQTLLTGPYSVMPSNVASPQVHFIMHQLNQCYTQLTWQQNNVQRLKQMLNELMRQQNQHPEKPGGKERGSSASHPPSPSLFCPFSFPTQPVNLFNIPGFTNFSSFAPGMNFSPLFPSNFGDFSQNISTPSEQQQPLAQNSSGKTEYMAFPKPFESSSSIGAEKPRNKKLPEEEVESSRTPWLYEQEGEVEKPFIKTGFSVSVEKSTSSNRKNQLDTNGRRRQFDEESLESFSSMPDPVDPTTVTKTFKTRKASAQASLASKDKTPKSKSKKRNSTQLKSRVKNIRYESASMSSTCEPCKSRNRHSAQTEEPVQAKVFSRKNHEQLEKIIKCNRSTEISSETGSDFSMFEALRDTIYSEVATLISQNESRPHFLIELFHELQLLNTDYLRQRALYALQDIVSRHISESHEKGENVKSVNSGTWIASNSELTPSESLATTDDETFEKNFERETHKISEQNDADNASVLSVSSNFEPFATDDLGNTVIHLDQALARMREYERMKTEAESNSNMRCTCRIIEDGDGAGAGTTVNNLEETPVIENRSSQQPVSEVSTIPCPRIDTQQLDRQIKAIMKEVIPFLKEHMDEVCSSQLLTSVRRMVLTLTQQNDESKEFVKFFHKQLGSILQDSLAKFAGRKLKDCGEDLLVEISEVLFNELAFFKLMQDLDNNSITVKQRCKRKIEATGVIQSCAKEAKRILEDHGSPAGEIDDEDKDKDETETVKQTQTSEVYDGPKNVRSDISDQEEDEESEGCPVSINLSKAETQALTNYGSGEDENEDEEMEEFEEGPVDVQTSLQANTEATEENEHDEQVLQRDFKKTAESKNVPLEREATSKNDQNNCPVKPCYLNILEDEQPLNSAAHKESPPTVDSTQQPNPLPLRLPEMEPLVPRVKEVKSAQETPESSLAGSPDTESPVLVNDYEAESGNISQKSDEEDFVKVEDLPLKLTIYSEADLRKKMVEEEQKNHLSGEICEMQTEELAGNSETLKEPETVGAQSI.

Positions 1-92 (MATGGGPFED…FPHSRYMSQM (92 aa)) are disordered. Ala2 is subject to N-acetylalanine. The interval 2–1460 (ATGGGPFEDG…TWIASNSELT (1459 aa)) is mediates interaction with DZIP1. The segment covering 43–61 (RSSEKNKKKFGVESDKRVT) has biased composition (basic and acidic residues). Phosphoserine occurs at positions 65, 68, 69, 93, 110, 116, and 119. The segment at 111-163 (DLDQRSIGSDSQGRATAANNKRQLSENRKPFNFLPMQINTNKSKDASTNPPNR) is disordered. Polar residues-rich tracts occupy residues 116-132 (SIGS…NNKR) and 147-163 (QINT…PPNR). A Phosphoserine; in variant Ser-159 modification is found at Asn159. Positions 218–301 (KASSMREDLV…QLRALQGRQA (84 aa)) form a coiled coil. The disordered stretch occupies residues 354–392 (RDSQPPAVPDNRRQAESLSLTREVSQSRKPSASERLPDE). Polar residues predominate over residues 369-383 (ESLSLTREVSQSRKP). Ser370 is subject to Phosphoserine. Residue Ser372 is modified to Phosphoserine; by PLK4. Ser384 carries the phosphoserine modification. N6-acetyllysine is present on Lys399. Positions 400-424 (MRVLQEKKQKMDKLLGELHTLRDQH) form a coiled coil. Disordered regions lie at residues 421–492 (RDQH…KLQK) and 523–548 (ENRK…VTNI). 2 stretches are compositionally biased toward polar residues: residues 425–445 (LNNS…SAPS) and 456–477 (GESN…SQNE). The stretch at 487–543 (SEKLQKLNEVRKRLNELRELVHYYEQTSDMMTDAVNENRKDEETEESEYDSEHENSE) forms a coiled coil. Position 588 is a phosphoserine (Ser588). Disordered stretches follow at residues 614–652 (HVAQ…HPED) and 699–726 (FYPA…DTGV). Residues 618–632 (GEDDEEEEEEAEEEG) are compositionally biased toward acidic residues. Low complexity predominate over residues 634–643 (SGASLSSHRS). Position 643 is a phosphoserine (Ser643). The stretch at 651-682 (EDAEFEQKINRLMAAKQKLRQLQDLVAMVQDD) forms a coiled coil. A compositionally biased stretch (polar residues) spans 708–719 (QNSNNTRGNANK). Coiled coils occupy residues 726-769 (VNEK…LQTA) and 824-858 (SEMR…GLAE). Thr859 carries the phosphothreonine modification. Phosphoserine occurs at positions 861, 866, 869, and 872. Thr877 carries the post-translational modification Phosphothreonine. A disordered region spans residues 915 to 947 (TDEEEEEEQDASSNDNFSVCPSNSVNHNSYNGK). The segment covering 925–946 (ASSNDNFSVCPSNSVNHNSYNG) has biased composition (polar residues). Phosphoserine occurs at positions 960, 977, 988, and 991. Positions 1063-1089 (TQLTWQQNNVQRLKQMLNELMRQQNQH) form a coiled coil. 2 disordered regions span residues 1085–1109 (QQNQ…PSPS) and 1152–1211 (FSQN…RTPW). A compositionally biased stretch (basic and acidic residues) spans 1089 to 1099 (HPEKPGGKERG). Positions 1152–1173 (FSQNISTPSEQQQPLAQNSSGK) are enriched in polar residues. 2 positions are modified to phosphoserine: Ser1185 and Ser1188. Residues 1192–1201 (EKPRNKKLPE) are compositionally biased toward basic and acidic residues. Ser1229 and Ser1231 each carry phosphoserine. Positions 1232–1246 (VEKSTSSNRKNQLDT) are enriched in polar residues. Residues 1232–1342 (VEKSTSSNRK…RHSAQTEEPV (111 aa)) form a disordered region. Phosphoserine occurs at positions 1257, 1260, 1262, and 1263. An interaction with HAP1 region spans residues 1279 to 1799 (TRKASAQASL…TQALTNYGSG (521 aa)). Basic residues predominate over residues 1296 to 1313 (KSKSKKRNSTQLKSRVKN). Phosphoserine occurs at positions 1318 and 1320. Residue Thr1468 is modified to Phosphothreonine. Residues 1515–1539 (IHLDQALARMREYERMKTEAESNSN) are a coiled coil. Ser1573, Ser1697, Ser1730, Ser1765, Ser1768, Ser1776, and Ser1782 each carry phosphoserine. Disordered stretches follow at residues 1725–1868 (LEDH…NNCP) and 1880–1944 (EQPL…PVLV). The segment covering 1768 to 1777 (SDQEEDEESE) has biased composition (acidic residues). Residues 1783–1797 (INLSKAETQALTNYG) are compositionally biased toward polar residues. Acidic residues predominate over residues 1799-1815 (GEDENEDEEMEEFEEGP). Residues 1818-1827 (VQTSLQANTE) show a composition bias toward polar residues. Positions 1835-1860 (DEQVLQRDFKKTAESKNVPLEREATS) are enriched in basic and acidic residues. Over residues 1905 to 1916 (PLRLPEMEPLVP) the composition is skewed to low complexity. The segment at 1913–2024 (PLVPRVKEVK…EPETVGAQSI (112 aa)) is interaction with BBS4. Residues 1924 to 1933 (AQETPESSLA) show a composition bias toward polar residues. Residues Ser1958 and Ser1977 each carry the phosphoserine modification. The interval 2005 to 2024 (ELAGNSETLKEPETVGAQSI) is disordered.

The protein belongs to the PCM1 family. Self-associates. Interacts with C2CD3. Interacts with BBS4, BBS8, CETN3, HAP1, NDE1, NDEL1, MAP1LC3B, GABARAPAL2, and GABARAP. Interacts with CEP131; the interaction increases in response to ultraviolet light (UV) radiation. Associates with microtubule; association to microtubule is reduced in response to cellular stress, such as ultraviolet light (UV) radiation or heat shock, in a process that requires p38 MAP kinase signaling. Interacts with CFAP263. Interacts with SSX2IP. Interacts with CCDC13. Interacts with CEP290. Interacts with PARD6A. Interacts with KIAA0753/OFIP, CEP20/FOR20 and OFD1; the interaction with CEP20/FOR20 and OFD1 may be mediated by KIAA0753/OFIP. Interacts with CCDC66. Interacts with CCDC61. Interacts with DZIP1; localizes DZIP1 and the associated BBSome to centriolar satellite. Interacts with CSTPP1, TTLL1, TPGS1 and LRRC49. Interacts with CFAP53. In terms of processing, ubiquitinated. Undergoes monoubiquitination catalyzed by the E3 ubiquitin-protein ligase MIB1 in proliferating cells, preventing cilia formation. Monoubiquitination by MIB1 is inhibited in response to cellular stress, such as ultraviolet light (UV) radiation or heat shock, resulting in cilia formation initiation. Post-translationally, variant Ser-159 is phosphorylated. Phosphorylated on multiple serine and threonine residues by DYRK3 during the G2-to-M transition, after the nuclear-envelope breakdown. Phosphorylation by DYRK3 promotes disassembly of pericentriolar material. Phosphorylation at Ser-372 mediated by PLK4 is required to maintain the integrity of centriolar satellites. Expressed in blood, bone marrow, breast, lymph node, ovary and thyroid.

It is found in the cytoplasm. It localises to the cytoskeleton. The protein localises to the microtubule organizing center. Its subcellular location is the centrosome. The protein resides in the cytoplasmic granule. It is found in the centriolar satellite. It localises to the cilium basal body. Required for centrosome assembly and function. Essential for the correct localization of several centrosomal proteins including CEP250, CETN3, PCNT and NEK2. Required to anchor microtubules to the centrosome. Also involved in cilium biogenesis by recruiting the BBSome, a ciliary protein complex involved in cilium biogenesis, to the centriolar satellites. Recruits the tubulin polyglutamylase complex (TPGC) to centriolar satellites. The sequence is that of Pericentriolar material 1 protein from Homo sapiens (Human).